The chain runs to 105 residues: Small ribosomal subunit protein uS10c (105 aa).

Belongs to the universal ribosomal protein uS10 family. As to quaternary structure, part of the 30S ribosomal subunit.

The protein localises to the plastid. Its subcellular location is the chloroplast. Functionally, involved in the binding of tRNA to the ribosomes. In Gracilaria tenuistipitata var. liui (Red alga), this protein is Small ribosomal subunit protein uS10c.